Reading from the N-terminus, the 206-residue chain is Large ribosomal subunit protein uL4 (206 aa).

This sequence belongs to the universal ribosomal protein uL4 family. As to quaternary structure, part of the 50S ribosomal subunit.

One of the primary rRNA binding proteins, this protein initially binds near the 5'-end of the 23S rRNA. It is important during the early stages of 50S assembly. It makes multiple contacts with different domains of the 23S rRNA in the assembled 50S subunit and ribosome. Its function is as follows. Forms part of the polypeptide exit tunnel. In Nitrobacter winogradskyi (strain ATCC 25391 / DSM 10237 / CIP 104748 / NCIMB 11846 / Nb-255), this protein is Large ribosomal subunit protein uL4.